Here is a 734-residue protein sequence, read N- to C-terminus: Photosystem I P700 chlorophyll a apoprotein A2 (734 aa).

Transmembrane regions (helical) follow at residues 46-69, 135-158, 175-199, 273-291, 330-353, 369-395, 417-439, and 517-535; these read IFASHFGQLAIIFLWTSGNLFHVA, LYVGSIFLLVLAGLFLFAGWLHLQ, LNHHLAGLFGVSSLAWTGHLVHVAI, MAHHHLAIAVVFILAGHMY, LHFQLGLALASVGTICSLVAQHMY, ASLYTHHQYIAGFIMCGAFAHGAIFFV, AIISHLSWVSLFLGFHTLGLYVH, and FLVHHAIALGLHTTTLILV. The [4Fe-4S] cluster site is built by cysteine 559 and cysteine 568. 2 helical membrane passes run 575–596 and 643–665; these read AFYLAVFWMLNTIGWVTFYFHW and LSVWAWMFLFGHLIYATGFMFLI. Chlorophyll a-binding residues include histidine 654, methionine 662, and tyrosine 670. Tryptophan 671 is a phylloquinone binding site. A helical membrane pass occupies residues 707–727; that stretch reads LVGLTHFSVGYVLTYAAFLIA.

The protein belongs to the PsaA/PsaB family. As to quaternary structure, the PsaA/B heterodimer binds the P700 chlorophyll special pair and subsequent electron acceptors. PSI consists of a core antenna complex that captures photons, and an electron transfer chain that converts photonic excitation into a charge separation. The eukaryotic PSI reaction center is composed of at least 11 subunits. P700 is a chlorophyll a/chlorophyll a' dimer, A0 is one or more chlorophyll a, A1 is one or both phylloquinones and FX is a shared 4Fe-4S iron-sulfur center. serves as cofactor.

It localises to the plastid. It is found in the chloroplast thylakoid membrane. It carries out the reaction reduced [plastocyanin] + hnu + oxidized [2Fe-2S]-[ferredoxin] = oxidized [plastocyanin] + reduced [2Fe-2S]-[ferredoxin]. In terms of biological role, psaA and PsaB bind P700, the primary electron donor of photosystem I (PSI), as well as the electron acceptors A0, A1 and FX. PSI is a plastocyanin/cytochrome c6-ferredoxin oxidoreductase, converting photonic excitation into a charge separation, which transfers an electron from the donor P700 chlorophyll pair to the spectroscopically characterized acceptors A0, A1, FX, FA and FB in turn. Oxidized P700 is reduced on the lumenal side of the thylakoid membrane by plastocyanin or cytochrome c6. This is Photosystem I P700 chlorophyll a apoprotein A2 from Chlorella vulgaris (Green alga).